Here is a 207-residue protein sequence, read N- to C-terminus: Small ribosomal subunit protein uS4 (207 aa).

Residues 26–53 (KPFDVKTKKHAKAPGQHGQARGKQSEYS) are disordered. The region spanning 97 to 159 (SRLDNVVYRM…AKQQLRIKNA (63 aa)) is the S4 RNA-binding domain.

The protein belongs to the universal ribosomal protein uS4 family. Part of the 30S ribosomal subunit. Contacts protein S5. The interaction surface between S4 and S5 is involved in control of translational fidelity.

Functionally, one of the primary rRNA binding proteins, it binds directly to 16S rRNA where it nucleates assembly of the body of the 30S subunit. With S5 and S12 plays an important role in translational accuracy. The chain is Small ribosomal subunit protein uS4 from Acinetobacter baylyi (strain ATCC 33305 / BD413 / ADP1).